The following is a 328-amino-acid chain: DNA repair protein RAD51 homolog 4 (328 aa).

Positions 1–83 (MGVLRVGLCP…ELKTSTAILS (83 aa)) are preferentially binds ssDNA. 107–114 (GGPGSGKT) is an ATP binding site.

Belongs to the RecA family. RAD51 subfamily. As to quaternary structure, part of the BCDX2 complex consisting of RAD51B, RAD51C, RAD51D and XRCC2; the complex has a ring-like structure arranged into a flat disc around a central channel. In the absence of DNA, the BCDX2 subcomplex XRCC2:RAD51D formed a multimeric ring structure; in the presence of single-stranded DNA it formed a filamentous structure with the ssDNA. Interacts with SWSAP1 and ZSWIM7; involved in homologous recombination repair. Interacts with BLM; required for stimulation of BLM activity by the BCDX2 subcomplex XRCC2:RAD51D. In terms of tissue distribution, expressed in colon, prostate, spleen, testis, ovary, thymus and small intestine. Weakly expressed in leukocytes.

The protein resides in the nucleus. The protein localises to the cytoplasm. It is found in the cytoskeleton. Its subcellular location is the microtubule organizing center. It localises to the centrosome. The protein resides in the chromosome. The protein localises to the telomere. Its function is as follows. Involved in the homologous recombination repair (HRR) pathway of double-stranded DNA breaks arising during DNA replication or induced by DNA-damaging agents. Bind to single-stranded DNA (ssDNA) and has DNA-dependent ATPase activity. Part of the RAD51 paralog protein complex BCDX2 which acts in the BRCA1-BRCA2-dependent HR pathway. Upon DNA damage, BCDX2 acts downstream of BRCA2 recruitment and upstream of RAD51 recruitment. BCDX2 binds predominantly to the intersection of the four duplex arms of the Holliday junction and to junction of replication forks. The BCDX2 complex was originally reported to bind single-stranded DNA, single-stranded gaps in duplex DNA and specifically to nicks in duplex DNA. Involved in telomere maintenance. The BCDX2 subcomplex XRCC2:RAD51D can stimulate Holliday junction resolution by BLM. The polypeptide is DNA repair protein RAD51 homolog 4 (RAD51D) (Homo sapiens (Human)).